The following is a 536-amino-acid chain: ADP,ATP carrier protein 4 (536 aa).

The next 9 membrane-spanning stretches (helical) occupy residues 44–64 (VLLF…LYVL), 77–97 (SILF…IVIV), 109–129 (MLEV…FVIW), 172–194 (TMLY…FSRA), 205–225 (KFLP…GLLT), 244–264 (FSQV…TSFF), 309–329 (VVAA…GIVL), 349–369 (AQII…THLI), and 378–398 (AITA…MVFF). N-linked (GlcNAc...) asparagine glycans are attached at residues Asn400 and Asn421. 2 helical membrane-spanning segments follow: residues 465–485 (LGIN…TVVF) and 493–513 (VVSV…RSIL).

The protein belongs to the ADP/ATP translocase tlc family.

The protein localises to the cell membrane. ATP transporter involved in the uptake of ATP from the host cell cytoplasm. Provides the microsporidian cell with host ATP in exchange for ADP. This is an obligate exchange system. This energy acquiring activity is an important component of microsporidian parasitism. In Encephalitozoon cuniculi (strain GB-M1) (Microsporidian parasite), this protein is ADP,ATP carrier protein 4 (NTT4).